The sequence spans 479 residues: Nucleoside-diphosphatase uda-1 (479 aa).

Residues 1 to 7 (MLFPAFS) are Cytoplasmic-facing. Residues 8 to 24 (ILLISFFSLLSVVTTKT) form a helical; Signal-anchor for type II membrane protein membrane-spanning segment. The Lumenal segment spans residues 25–479 (QYWCHGDGVL…VLSYFNIISV (455 aa)). E171 acts as the Proton acceptor in catalysis. N-linked (GlcNAc...) asparagine glycans are attached at residues N300 and N452.

This sequence belongs to the GDA1/CD39 NTPase family. Requires Ca(2+) as cofactor. It depends on Mg(2+) as a cofactor. The cofactor is Mn(2+).

The protein resides in the endomembrane system. The catalysed reaction is a ribonucleoside 5'-diphosphate + H2O = a ribonucleoside 5'-phosphate + phosphate + H(+). In terms of biological role, hydrolyzes UDP and GDP but not any other nucleoside di-, mono- or triphosphates. May promote reglycosylation reactions involved in glycoproteins folding and quality control in the endoplasmic reticulum. The chain is Nucleoside-diphosphatase uda-1 (uda-1) from Caenorhabditis elegans.